A 255-amino-acid polypeptide reads, in one-letter code: 1-(5-phosphoribosyl)-5-[(5-phosphoribosylamino)methylideneamino] imidazole-4-carboxamide isomerase (255 aa).

Asp-8 (proton acceptor) is an active-site residue. Catalysis depends on Asp-129, which acts as the Proton donor.

The protein belongs to the HisA/HisF family.

Its subcellular location is the cytoplasm. It carries out the reaction 1-(5-phospho-beta-D-ribosyl)-5-[(5-phospho-beta-D-ribosylamino)methylideneamino]imidazole-4-carboxamide = 5-[(5-phospho-1-deoxy-D-ribulos-1-ylimino)methylamino]-1-(5-phospho-beta-D-ribosyl)imidazole-4-carboxamide. Its pathway is amino-acid biosynthesis; L-histidine biosynthesis; L-histidine from 5-phospho-alpha-D-ribose 1-diphosphate: step 4/9. The protein is 1-(5-phosphoribosyl)-5-[(5-phosphoribosylamino)methylideneamino] imidazole-4-carboxamide isomerase of Prochlorococcus marinus (strain MIT 9301).